A 114-amino-acid polypeptide reads, in one-letter code: KPKEDREWEKFKTKHITSQSVADFNCNRTMNDPAYTPDGQCKPINTFIHSTTGPVKEICRRATGRVNKSSTQQFTLTTCKNPIRCKYSQSNTTNFICITCRDNYPVHFVKTGKC.

The Proton acceptor role is filled by histidine 15. 4 disulfide bridges follow: cysteine 26/cysteine 79, cysteine 41/cysteine 85, cysteine 59/cysteine 100, and cysteine 97/cysteine 114. Asparagine 27 is a glycosylation site (N-linked (GlcNAc...) asparagine). 42–46 (KPINT) lines the substrate pocket. Residues asparagine 67 and asparagine 91 are each glycosylated (N-linked (GlcNAc...) asparagine). The active-site Proton donor is the histidine 107.

It belongs to the pancreatic ribonuclease family. As to quaternary structure, monomer. Post-translationally, there are at least four different forms arising from glycan heterogeneity.

Its subcellular location is the secreted. Functionally, endonuclease, hydrolyzes highly polymerized RNA, poly(U) and poly(C), and the dinucleotides CpA and UpA. Hydrolyzes 18S and 28S ribosomal RNA. More active towards rCA than rUA or rUG. Has cytotoxic activity against cultured human submaxillary gland carcinoma cells. The protein is Amphinase-2 of Lithobates pipiens (Northern leopard frog).